Consider the following 595-residue polypeptide: Threonine dehydratase 2 biosynthetic, chloroplastic (595 aa).

The transit peptide at 1-51 (MEFLCLAPTRSFSTNPKLTKSIPSDHTSTTSRIFTYQNMRGSTMRPLALPL) directs the protein to the chloroplast. Lysine 143 bears the N6-(pyridoxal phosphate)lysine mark. 2 consecutive ACT-like domains span residues 420 to 492 (ALLA…NLSH) and 514 to 585 (IFGE…LDNY).

It belongs to the serine/threonine dehydratase family. Homotetramer. Requires pyridoxal 5'-phosphate as cofactor. Post-translationally, proteolytically cleaved by a chymotrypsin-like digestive protease in the midgut of the lepidopteran insects to remove the C-terminal regulatory domain, which allows efficient metabolizing of threonine in the presence of high isoleucine levels in the gut. Expressed in floral buds, 8-9 mm long flowers 1 to 2 days before anthesis, open flowers and floral organs including sepals, petals, stamens and carpels of 8-9 mm flowers (at protein level). Expressed in very early floral meristems of the anantha. Over 500-fold expression in mature flowers compared to leaves. Expressed in sepals, petals, stamens and carpels of the mature flower. In sepals, mostly expressed in the abaxial mesophyll cells and in petals in parenchymal cells. Not expressed in epidermal or vascular tissues of sepals and petals. In stamens, expressed in parenchymal cells of the connective and lobes, but not expressed in differentiated tissues such as tapetum (TP), stomium (SM), or pollen grains (PG). Not expressed in roots or seeds. High level of expression in immature flower buds, unopened flowers and opened flowers. Not expressed in unstressed leaves, root, stem or petiole.

The protein resides in the plastid. The protein localises to the chloroplast. It catalyses the reaction L-threonine = 2-oxobutanoate + NH4(+). It carries out the reaction L-serine = pyruvate + NH4(+). It participates in amino-acid biosynthesis; L-isoleucine biosynthesis; 2-oxobutanoate from L-threonine: step 1/1. Its activity is regulated as follows. Threonine dehydratase 2 biosynthetic, chloroplastic: Strongly inhibited by 1 mM isoleucine. Processed threonine dehydratase 2: Not inhibited by isoleucine. Not required for normal growth and development of the plant. In terms of biological role, involved in defense against lepidopteran, but not coleopteran herbivore insects. Acts in the insect gut to degrade threonine, which is an essential and limiting nutrient for the growth of lepidopteran larvae. Active against both L-threonine and L-serine. The chain is Threonine dehydratase 2 biosynthetic, chloroplastic from Solanum lycopersicum (Tomato).